Reading from the N-terminus, the 558-residue chain is Kelch-like protein 23 (558 aa).

The region spanning 36-104 is the BTB domain; sequence TDITLQCPSG…AYTSQIEITK (69 aa). The BACK domain occupies 139–240; the sequence is CIGMHSFAEF…DPVYLKTALG (102 aa). Kelch repeat units follow at residues 274–320, 321–369, 370–416, 418–466, 467–508, and 510–557; these read TMYI…CLGP, NIYV…TLGG, CVYA…VLHD, IYVI…PFEN, KLYL…IMNG, and IYVT…CVYN.

In Homo sapiens (Human), this protein is Kelch-like protein 23 (KLHL23).